The chain runs to 236 residues: MYQLGDVKKIVLPGDPIEVQGKMRNGVYRGQDNRYYSEYFGTLQVNDQFVDVVPFSGQYIPRKGDKVIGKVIEVGPSTWTVDINSPYFAMLHMNDTPWRMSSGDLKRYLNAGDYIYAKIMSVNEIKESWLTLKEPGLKKLEGGHMVLIHASRVPRVIGKGGGMVNMVKELTATRIIIGQNGLIWIDGPIEGVTMAIAAIEMIEREAHTEGLTARVESFLKELKGEKDGSQQNKADQ.

The S1 motif domain occupies 64-133 (GDKVIGKVIE…EIKESWLTLK (70 aa)). One can recognise a KH domain in the interval 141–199 (EGGHMVLIHASRVPRVIGKGGGMVNMVKELTATRIIIGQNGLIWIDGPIEGVTMAIAAI).

Belongs to the RRP4 family. In terms of assembly, component of the archaeal exosome complex. Forms a trimer of Rrp4 and/or Csl4 subunits. The trimer associates with a hexameric ring-like arrangement composed of 3 Rrp41-Rrp42 heterodimers.

The protein localises to the cytoplasm. Functionally, non-catalytic component of the exosome, which is a complex involved in RNA degradation. Increases the RNA binding and the efficiency of RNA degradation. Confers strong poly(A) specificity to the exosome. The chain is Exosome complex component Rrp4 from Thermoplasma acidophilum (strain ATCC 25905 / DSM 1728 / JCM 9062 / NBRC 15155 / AMRC-C165).